The following is a 95-amino-acid chain: Small ribosomal subunit protein bS6 (95 aa).

The protein belongs to the bacterial ribosomal protein bS6 family.

In terms of biological role, binds together with bS18 to 16S ribosomal RNA. The chain is Small ribosomal subunit protein bS6 from Thermoanaerobacter pseudethanolicus (strain ATCC 33223 / 39E) (Clostridium thermohydrosulfuricum).